Reading from the N-terminus, the 164-residue chain is Ribonuclease H (164 aa).

Positions 9 to 150 (DMPRVTIYTD…ADTLANAATD (142 aa)) constitute an RNase H type-1 domain. Residues D18, E56, D78, and D142 each contribute to the Mg(2+) site.

It belongs to the RNase H family. In terms of assembly, monomer. The cofactor is Mg(2+).

The protein localises to the cytoplasm. It carries out the reaction Endonucleolytic cleavage to 5'-phosphomonoester.. In terms of biological role, endonuclease that specifically degrades the RNA of RNA-DNA hybrids. The sequence is that of Ribonuclease H from Chromohalobacter salexigens (strain ATCC BAA-138 / DSM 3043 / CIP 106854 / NCIMB 13768 / 1H11).